We begin with the raw amino-acid sequence, 215 residues long: 3-demethoxyubiquinol 3-hydroxylase (215 aa).

E64, E94, H97, E146, E178, and H181 together coordinate Fe cation.

Belongs to the COQ7 family. Fe cation is required as a cofactor.

Its subcellular location is the cell membrane. The catalysed reaction is a 5-methoxy-2-methyl-3-(all-trans-polyprenyl)benzene-1,4-diol + AH2 + O2 = a 3-demethylubiquinol + A + H2O. The protein operates within cofactor biosynthesis; ubiquinone biosynthesis. In terms of biological role, catalyzes the hydroxylation of 2-nonaprenyl-3-methyl-6-methoxy-1,4-benzoquinol during ubiquinone biosynthesis. The sequence is that of 3-demethoxyubiquinol 3-hydroxylase from Stutzerimonas stutzeri (strain A1501) (Pseudomonas stutzeri).